Reading from the N-terminus, the 223-residue chain is UPF0758 protein Tgr7_0100 (223 aa).

In terms of domain architecture, MPN spans 102-223 (ALTSPDDTRR…LVSFAERGLL (122 aa)). H173, H175, and D186 together coordinate Zn(2+). Positions 173-186 (HNHPSGVAEPSRSD) match the JAMM motif motif.

Belongs to the UPF0758 family.

In Thioalkalivibrio sulfidiphilus (strain HL-EbGR7), this protein is UPF0758 protein Tgr7_0100.